The chain runs to 145 residues: Small ribosomal subunit protein bS16 (145 aa).

The disordered stretch occupies residues 82 to 145 (IKERAATNNP…EAAAEEQTEA (64 aa)). The span at 95 to 115 (EPGKKAKERAEERAEKAREAA) shows a compositional bias: basic and acidic residues. The span at 116–137 (EAAAAAAAAPAEEAAAEAPAEA) shows a compositional bias: low complexity.

Belongs to the bacterial ribosomal protein bS16 family.

This chain is Small ribosomal subunit protein bS16, found in Novosphingobium aromaticivorans (strain ATCC 700278 / DSM 12444 / CCUG 56034 / CIP 105152 / NBRC 16084 / F199).